We begin with the raw amino-acid sequence, 9518 residues long: Nonribosomal peptide synthetase ungA' (9518 aa).

Residues 214 to 611 form an adenylation 1 region; that stretch reads ERARETPNAP…ARKDDQVKVR (398 aa). The region spanning 738-814 is the Carrier 1 domain; that stretch reads APRTEMEWRL…DLAEVARLEQ (77 aa). Residue serine 775 is modified to O-(pantetheine 4'-phosphoryl)serine. The segment at 853 to 1250 is condensation 1; that stretch reads DLLPCSPLQE…EEVLRQISRE (398 aa). Positions 1292–1695 are adenylation 2; that stretch reads QRVQEQPDRP…GRKDTQVKIR (404 aa). Positions 1822 to 1898 constitute a Carrier 2 domain; that stretch reads LPQTELERRL…RLAHCSQTEQ (77 aa). The residue at position 1859 (serine 1859) is an O-(pantetheine 4'-phosphoryl)serine. Residues 1911–2336 are epimerization 1; sequence TFALSPIQQL…QRSLEVVAKE (426 aa). The interval 2376–2803 is condensation 2; it reads EDIYPCSPVQ…DNLQIASSQD (428 aa). Positions 2829 to 3224 are adenylation 3; sequence RIQQQPEAPA…NRKDNQVKIR (396 aa). The Carrier 3 domain occupies 3352–3428; that stretch reads APATASEQRL…DMAQTLKVES (77 aa). Serine 3389 is subject to O-(pantetheine 4'-phosphoryl)serine. Residues 3465–3869 are condensation 3; that stretch reads EDVLPCTPLQ…QVCKEASQYL (405 aa). The tract at residues 3906–4307 is adenylation 4; sequence QQAHQRPNAS…GRRDAQVKIR (402 aa). Residues 4436–4512 form the Carrier 4 domain; that stretch reads TPTTITECRI…RLAACTTPVD (77 aa). Serine 4473 is modified (O-(pantetheine 4'-phosphoryl)serine). Residues 4527-4954 are epimerization 2; the sequence is ALSPIQQLFV…EDAAQELPSL (428 aa). Residues 4990 to 5411 are condensation 4; the sequence is VEDIYPCSPI…ANLISKEDLR (422 aa). The tract at residues 5433–5829 is adenylation 5; sequence SEQAQNQPDA…GRKDGQVKIR (397 aa). One can recognise a Carrier 5 domain in the interval 5957–6033; sequence VASSPVELAL…QLAKNSGLQA (77 aa). Serine 5994 is subject to O-(pantetheine 4'-phosphoryl)serine. Residues 6050-6470 form an epimerization 3 region; sequence ELSPIQRMFF…CEHSLVMAAH (421 aa). A condensation 5 region spans residues 6512 to 6856; the sequence is VEDIYPCTPI…TGISVQNNAS (345 aa). The tract at residues 6947 to 7338 is adenylation 6; it reads LRPNSSAIHA…GRKDSQVKVR (392 aa). In terms of domain architecture, Carrier 6 spans 7464-7540; that stretch reads LPRTEVEMQL…GLAPSAASQA (77 aa). An O-(pantetheine 4'-phosphoryl)serine modification is found at serine 7501. The interval 7555 to 7978 is epimerization 4; the sequence is ELSPIQQMFI…LQTAARELPH (424 aa). A condensation 6 region spans residues 8016-8444; the sequence is VEDIYPLTPI…QVDLAGRHDQ (429 aa). Residues 8468 to 8867 form an adenylation 7 region; sequence MQCQQRPDAT…SRKDAQVKIR (400 aa). Residues 8995–9071 form the Carrier 7 domain; sequence PLTTEMEWRL…DMAHYLREGQ (77 aa). The residue at position 9032 (serine 9032) is an O-(pantetheine 4'-phosphoryl)serine. The condensation 7 stretch occupies residues 9111-9454; that stretch reads DVYPTTELQD…DNLEHDAGTS (344 aa).

This sequence belongs to the NRP synthetase family.

It participates in secondary metabolite biosynthesis. Nonribosomal peptide synthetase; part of the gene cluster that mediates the biosynthesis of the unguisins, gamma-aminobutyric acid (GABA)-containing fungal cyclic heptapeptides with the amino acid sequence cyclo-(D-Ala1-D-Val2-L-Leu3-beta-MePhe4-D-Ala5-D-Trp6-GABA7) for unguisin H and cyclo-(D-Ala1-D-Ala2-L-Leu3-beta-MePhe4-D-Ala5-D-Trp6-GABA7) for unguisin I. UngA' is the main enzyme within the cluster which condenses the 7 residues using its respective 7 modules. The terminal condensation domain (Ct) is involved in cyclization with D-alanine and thereby releasing of unguisins H and I. The alanine racemase ungC' provides D-alanine, which is then accepted by the first adenylation domain of ungA', whereas the methyltransferase ungE' provides the (2R,3R)-beta-methylphenylalanine residue incorporated by the module 4. Finally, the hydrolase ungD' catalyzes the hydrolysis between the D-tryptophan and GABA residues of unguisins H and I to produce the corresponding linear peptides. In Aspergillus campestris (strain IBT 28561), this protein is Nonribosomal peptide synthetase ungA'.